We begin with the raw amino-acid sequence, 981 residues long: Lateral signaling target protein 2 homolog (981 aa).

The disordered stretch occupies residues 308-462; sequence PLGSSSIEAP…LESSDDDTDE (155 aa). Composition is skewed to low complexity over residues 326–356, 369–380, 390–404, and 412–433; these read TTSS…TTNT, NNHNSNSNSSTN, SPSM…TPTA, and PSHS…PADW. The span at 434 to 462 shows a compositional bias: acidic residues; it reads SDGDDEDEDDDDIEVDEEDLESSDDDTDE. A phosphoserine mark is found at S544 and S545. 2 disordered regions span residues 561–642 and 749–897; these read EQMQ…SSLS and DNVF…SPPA. The span at 576–611 shows a compositional bias: basic residues; that stretch reads HSHRHHQRHHHHHHHRHSHQHRQPHPHRTTRSGRKR. Residues 630 to 642 are compositionally biased toward low complexity; that stretch reads LASGDTSAASSLS. A compositionally biased stretch (polar residues) spans 760–791; it reads ATGQRHSAGASMQRNNTIDLASQSGEGSPSGA. S805 carries the post-translational modification Phosphoserine. 2 stretches are compositionally biased toward low complexity: residues 811 to 866 and 883 to 896; these read AASS…PVSA and PSSA…LSPP. The FYVE-type zinc finger occupies 901 to 961; it reads DGKAPRCMAC…VCRDCYVREV (61 aa). Positions 907, 910, 923, 926, 931, 934, 953, and 956 each coordinate Zn(2+).

Belongs to the lst-2 family.

Functionally, negative regulator of epidermal growth factor receptor (EGFR) signaling. The protein is Lateral signaling target protein 2 homolog of Drosophila erecta (Fruit fly).